Reading from the N-terminus, the 618-residue chain is MEVKNFAVWDYVVFAALFFISSGIGVFFAIKERKKATSREFLVGGRQMSFGPVGLSLTASFMSAVTVLGTPSEVYRFGASFLVFFIAYLFVILLTSELFLPVFYRSGITSTYEYLQLRFNKPVRYAATVIYIVQTILYTGVVVYAPALALNQVTGFDLWGSVFATGIVCTFYCTLGGLKAVVWTDAFQMVVMIVGFLTVLIQGSTHAGGFHNVLEQSTNGSRLHIFDFDVDPLRRHTFWTITVGGTFTWLGIYGVNQSTIQRCISCKTEKHAKLALYFNLLGLWIILVCAVFSGLIMYSHFKDCDPWTSGIISAPDQLMPYFVMEIFATMPGLPGLFVACAFSGTLSTVASSINALATVTFEDFVKSCFPHLSDKLSTWISKGLCLLFGVMCTSMAVAASVMGGVVQASLSIHGMCGGPMLGLFSLGIVFPFVNWKGALGGLLTGITLSFWVAIGAFIYPAPASKTWPLPLSTDQCIKSNVTATGPPVLSSRPGIADTWYSISYLYYSAVGCLGCIVAGVIISLITGRQRGEDIQPLLIRPVCNLFCFWSKKYKTLCWCGVQHDSGTEQENLENGSARKQGAESVLQNGLRRESLVHVPGYDPKDKSYNNMAFETTHF.

Residues 1 to 9 are Extracellular-facing; sequence MEVKNFAVW. A helical membrane pass occupies residues 10–30; that stretch reads DYVVFAALFFISSGIGVFFAI. The Cytoplasmic portion of the chain corresponds to 31–47; the sequence is KERKKATSREFLVGGRQ. Residues 48–68 traverse the membrane as a helical segment; it reads MSFGPVGLSLTASFMSAVTVL. The Extracellular segment spans residues 69–82; that stretch reads GTPSEVYRFGASFL. Residues 83 to 103 form a helical membrane-spanning segment; the sequence is VFFIAYLFVILLTSELFLPVF. At 104–128 the chain is on the cytoplasmic side; it reads YRSGITSTYEYLQLRFNKPVRYAAT. Residues 129–149 form a helical membrane-spanning segment; sequence VIYIVQTILYTGVVVYAPALA. The Extracellular segment spans residues 150–157; the sequence is LNQVTGFD. A helical transmembrane segment spans residues 158 to 178; it reads LWGSVFATGIVCTFYCTLGGL. Topologically, residues 179–180 are cytoplasmic; it reads KA. A helical membrane pass occupies residues 181 to 201; it reads VVWTDAFQMVVMIVGFLTVLI. Over 202–235 the chain is Extracellular; sequence QGSTHAGGFHNVLEQSTNGSRLHIFDFDVDPLRR. A helical membrane pass occupies residues 236–256; sequence HTFWTITVGGTFTWLGIYGVN. Topologically, residues 257–275 are cytoplasmic; that stretch reads QSTIQRCISCKTEKHAKLA. Residues 276–296 traverse the membrane as a helical segment; it reads LYFNLLGLWIILVCAVFSGLI. The Extracellular portion of the chain corresponds to 297–321; sequence MYSHFKDCDPWTSGIISAPDQLMPY. A helical membrane pass occupies residues 322-342; that stretch reads FVMEIFATMPGLPGLFVACAF. Residues 343-385 lie on the Cytoplasmic side of the membrane; sequence SGTLSTVASSINALATVTFEDFVKSCFPHLSDKLSTWISKGLC. The helical transmembrane segment at 386-406 threads the bilayer; that stretch reads LLFGVMCTSMAVAASVMGGVV. The Extracellular segment spans residues 407-411; it reads QASLS. The helical transmembrane segment at 412-432 threads the bilayer; that stretch reads IHGMCGGPMLGLFSLGIVFPF. Residues 433-437 are Cytoplasmic-facing; the sequence is VNWKG. Residues 438 to 458 traverse the membrane as a helical segment; it reads ALGGLLTGITLSFWVAIGAFI. Residues 459–504 lie on the Extracellular side of the membrane; it reads YPAPASKTWPLPLSTDQCIKSNVTATGPPVLSSRPGIADTWYSISY. N-linked (GlcNAc...) asparagine glycosylation is present at N480. Residues 505–525 form a helical membrane-spanning segment; that stretch reads LYYSAVGCLGCIVAGVIISLI. The Cytoplasmic segment spans residues 526–618; sequence TGRQRGEDIQ…NNMAFETTHF (93 aa).

It belongs to the sodium:solute symporter (SSF) (TC 2.A.21) family.

It is found in the apical cell membrane. It catalyses the reaction (S)-lactate(out) + Na(+)(out) = (S)-lactate(in) + Na(+)(in). The enzyme catalyses nicotinate(out) + Na(+)(out) = nicotinate(in) + Na(+)(in). The catalysed reaction is pyruvate(out) + Na(+)(out) = pyruvate(in) + Na(+)(in). It carries out the reaction propanoate(out) + Na(+)(out) = propanoate(in) + Na(+)(in). It catalyses the reaction butanoate(out) + Na(+)(out) = butanoate(in) + Na(+)(in). The enzyme catalyses acetoacetate(out) + Na(+)(out) = acetoacetate(in) + Na(+)(in). With respect to regulation, cotransport of monocarboxylates and nicotinate strongly inhibited by ibuprofen, fenoprofen and ketoprofen. In terms of biological role, acts as an electroneutral and low-affinity sodium (Na(+))-dependent sodium-coupled solute transporter. Catalyzes the transport across the plasma membrane of many monocarboxylates such as lactate, pyruvate, nicotinate, propionate, butyrate and beta-D-hydroxybutyrate. May be responsible for the first step of reabsorption of monocarboxylates from the lumen of the proximal tubule of the kidney and the small intestine. May play also a role in monocarboxylates transport in the retina. The chain is Sodium-coupled monocarboxylate transporter 2 from Homo sapiens (Human).